A 346-amino-acid polypeptide reads, in one-letter code: Uroporphyrinogen decarboxylase (346 aa).

Substrate is bound by residues 21 to 25, Asp-71, Tyr-146, Ser-201, and His-316; that span reads RQAGR.

The protein belongs to the uroporphyrinogen decarboxylase family. In terms of assembly, homodimer.

It is found in the cytoplasm. It catalyses the reaction uroporphyrinogen III + 4 H(+) = coproporphyrinogen III + 4 CO2. The protein operates within porphyrin-containing compound metabolism; protoporphyrin-IX biosynthesis; coproporphyrinogen-III from 5-aminolevulinate: step 4/4. Functionally, catalyzes the decarboxylation of four acetate groups of uroporphyrinogen-III to yield coproporphyrinogen-III. This Rickettsia africae (strain ESF-5) protein is Uroporphyrinogen decarboxylase.